A 91-amino-acid polypeptide reads, in one-letter code: Anther-specific protein RTS (91 aa).

An N-terminal signal peptide occupies residues 1–21; that stretch reads MVRVGAAAAVLVLAAAAAAMA.

In terms of biological role, required for tapetum and pollen development. The chain is Anther-specific protein RTS from Oryza sativa subsp. japonica (Rice).